A 457-amino-acid polypeptide reads, in one-letter code: MDLKGKNVLVVGLGRSGLASARFLKKHGAFVIGFDEKAEEQFKEEKNDAQKLLDEIYYCEIPDEFIDRVQLVIVSPGVPLSKRPLVLAHKKGIEVIGEIELAYRFCKSKNIVAITGTNGKTTTTTLVGEILKKQYEDVVVCGNIGLPFIDTIETSSEDTIFVLEISSFQLETIKYFKPKIGCILNITPDHLNRHLTMENYTKAKMRIFENIDEMGYTVLNYDNNITRDLIGLAKGNVIVFSKTKTQFENVVFVENDVIYFTFEGKTQEVMKKDEIFIPGQHNLENALAAISCTLPFGIEKDTIEQVLKTFRGVEHRIEFVAEINGIKFYNDSKGTNTDAAEKALNAFENPIILIAGGYDKGESFEKFASLVAKKVKKVFLLGQTKQKIASELERIGYKNFEFVSTLKEAVRKSFECAQNGDIVLLSPACASWDMFENYEQRGRMFKEYVNELLTTGM.

Residue 116-122 (GTNGKTT) participates in ATP binding.

Belongs to the MurCDEF family.

It is found in the cytoplasm. It carries out the reaction UDP-N-acetyl-alpha-D-muramoyl-L-alanine + D-glutamate + ATP = UDP-N-acetyl-alpha-D-muramoyl-L-alanyl-D-glutamate + ADP + phosphate + H(+). It participates in cell wall biogenesis; peptidoglycan biosynthesis. Cell wall formation. Catalyzes the addition of glutamate to the nucleotide precursor UDP-N-acetylmuramoyl-L-alanine (UMA). This chain is UDP-N-acetylmuramoylalanine--D-glutamate ligase, found in Caldicellulosiruptor bescii (strain ATCC BAA-1888 / DSM 6725 / KCTC 15123 / Z-1320) (Anaerocellum thermophilum).